We begin with the raw amino-acid sequence, 92 residues long: MENNTFSSKSINLLILLLLLCTFLCQTESALPSHQELVITGRRMMSYYKPNTDIGTPSSTSDRGGGGNGRRLMSQMDVGASSSGQGGGRNRH.

The first 29 residues, 1–29, serve as a signal peptide directing secretion; sequence MENNTFSSKSINLLILLLLLCTFLCQTES. A disordered region spans residues 50–92; that stretch reads PNTDIGTPSSTSDRGGGGNGRRLMSQMDVGASSSGQGGGRNRH. Residues 53 to 62 are compositionally biased toward polar residues; the sequence is DIGTPSSTSD. 2 consecutive short sequence motifs (SCOOP motif) follow at residues 53–67 and 75–89; these read DIGT…GGGG and QMDV…GGGR. Short sequence motifs (sxS motif essential for MIK2 binding) lie at residues 59-61 and 81-83; these read STS and SSS.

The protein belongs to the serine rich endogenous peptide (SCOOP) phytocytokine family. As to quaternary structure, interacts with MIK2 (via extracellular leucine-rich repeat domain); this interaction triggers the formation of complex between MIK2 and the BAK1/SERK3 and SERK4 coreceptors, and subsequent BAK1 activation by phosphorylation. As to expression, mostly expressed in seedlings shoots and roots, and, to a lower extent, in leaves.

It localises to the cell membrane. The protein localises to the secreted. It is found in the extracellular space. The protein resides in the apoplast. Its function is as follows. Brassicaceae-specific phytocytokine (plant endogenous peptide released into the apoplast) perceived by MIK2 in a BAK1/SERK3 and SERK4 coreceptors-dependent manner, that modulates various physiological and antimicrobial processes including growth prevention and reactive oxygen species (ROS) response regulation. In Arabidopsis thaliana (Mouse-ear cress), this protein is Serine rich endogenous peptide 11.